A 92-amino-acid polypeptide reads, in one-letter code: Kinetoplastid membrane protein 11 (92 aa).

Belongs to the KMP-11 family. In terms of assembly, monomer.

The protein localises to the cytoplasm. It is found in the cytoskeleton. Its function is as follows. May be involved in the regulation of the cytoskeleton through interaction with the subpellicular microtubules. May be involved in parasite mobility and attachment to the surface of the host cell. Behaves as a strong immunogen during infection. In Trypanosoma brucei brucei, this protein is Kinetoplastid membrane protein 11 (KMP-11/1).